The chain runs to 125 residues: DNA-directed RNA polymerase II subunit RPB9 (125 aa).

Position 1 is an N-acetylmethionine (M1). Zn(2+) contacts are provided by C17, C20, C39, C42, C86, C89, C114, and C119. The C4-type zinc-finger motif lies at 17-42 (CQECNNMLYPKEDKENRILLYACRNC). A TFIIS-type zinc finger spans residues 82–124 (EDHPCQKCGHKEAVFFQSHSARAEDAMRLYYVCTAPHCGHRWT).

This sequence belongs to the archaeal RpoM/eukaryotic RPA12/RPB9/RPC11 RNA polymerase family. As to quaternary structure, component of the RNA polymerase II (Pol II) core complex consisting of 12 subunits: a ten-subunit catalytic core composed of POLR2A/RPB1, POLR2B/RPB2, POLR2C/RPB3, POLR2I/RPB9, POLR2J/RPB11, POLR2E/RPABC1, POLR2F/RPABC2, POLR2H/RPABC3, POLR2K/RPABC4 and POLR2L/RPABC5 and a mobile stalk composed of two subunits POLR2D/RPB4 and POLR2G/RPB7, protruding from the core and functioning primarily in transcription initiation. Part of Pol II(G) complex, in which Pol II core associates with an additional subunit POLR2M; unlike conventional Pol II, Pol II(G) functions as a transcriptional repressor. Part of TBP-based Pol II pre-initiation complex (PIC), in which Pol II core assembles with general transcription factors and other specific initiation factors including GTF2E1, GTF2E2, GTF2F1, GTF2F2, TCEA1, ERCC2, ERCC3, GTF2H2, GTF2H3, GTF2H4, GTF2H5, GTF2A1, GTF2A2, GTF2B and TBP; this large multi-subunit PIC complex mediates DNA unwinding and targets Pol II core to the transcription start site where the first phosphodiester bond forms.

It localises to the nucleus. Its subcellular location is the nucleolus. In terms of biological role, DNA-dependent RNA polymerase catalyzes the transcription of DNA into RNA using the four ribonucleoside triphosphates as substrates. Component of RNA polymerase II which synthesizes mRNA precursors and many functional non-coding RNAs. Pol II is the central component of the basal RNA polymerase II transcription machinery. It is composed of mobile elements that move relative to each other. POLR2I/RPB9 is part of the upper jaw surrounding the central large cleft and thought to grab the incoming DNA template. The protein is DNA-directed RNA polymerase II subunit RPB9 (POLR2I) of Bos taurus (Bovine).